We begin with the raw amino-acid sequence, 245 residues long: 14-3-3 protein zeta (245 aa).

It belongs to the 14-3-3 family. Homodimer. As to expression, present in all adult tissues examined with the highest levels in the brain.

It localises to the cytoplasm. Its function is as follows. Adapter protein implicated in the regulation of a large spectrum of both general and specialized signaling pathways. Binds to a large number of partners, usually by recognition of a phosphoserine or phosphothreonine motif. Binding generally results in the modulation of the activity of the binding partner. The chain is 14-3-3 protein zeta (ywhaz) from Xenopus laevis (African clawed frog).